The following is a 750-amino-acid chain: Photosystem I P700 chlorophyll a apoprotein A1 (750 aa).

Transmembrane regions (helical) follow at residues 70–93 (IFSA…FHGA), 156–179 (LYCT…FHYH), 195–219 (LNHH…HVSL), 291–309 (IAHH…GHMY), 346–369 (WHAQ…HHMY), 385–411 (LSLF…IFMV), 433–455 (AIIS…LYIH), and 531–549 (FLVH…LILL). [4Fe-4S] cluster-binding residues include C573 and C582. Transmembrane regions (helical) follow at residues 589 to 610 (HVFL…HFSW) and 664 to 686 (LSAY…MFLF). H675 is a binding site for chlorophyll a'. Chlorophyll a-binding residues include M683 and Y691. W692 is a binding site for phylloquinone. A helical transmembrane segment spans residues 724–744 (AVGVTHYLLGGIATTWAFFLA).

It belongs to the PsaA/PsaB family. The PsaA/B heterodimer binds the P700 chlorophyll special pair and subsequent electron acceptors. PSI consists of a core antenna complex that captures photons, and an electron transfer chain that converts photonic excitation into a charge separation. The eukaryotic PSI reaction center is composed of at least 11 subunits. P700 is a chlorophyll a/chlorophyll a' dimer, A0 is one or more chlorophyll a, A1 is one or both phylloquinones and FX is a shared 4Fe-4S iron-sulfur center. is required as a cofactor.

Its subcellular location is the plastid. The protein resides in the chloroplast thylakoid membrane. It catalyses the reaction reduced [plastocyanin] + hnu + oxidized [2Fe-2S]-[ferredoxin] = oxidized [plastocyanin] + reduced [2Fe-2S]-[ferredoxin]. PsaA and PsaB bind P700, the primary electron donor of photosystem I (PSI), as well as the electron acceptors A0, A1 and FX. PSI is a plastocyanin-ferredoxin oxidoreductase, converting photonic excitation into a charge separation, which transfers an electron from the donor P700 chlorophyll pair to the spectroscopically characterized acceptors A0, A1, FX, FA and FB in turn. Oxidized P700 is reduced on the lumenal side of the thylakoid membrane by plastocyanin. The polypeptide is Photosystem I P700 chlorophyll a apoprotein A1 (Lotus japonicus (Lotus corniculatus var. japonicus)).